A 1368-amino-acid polypeptide reads, in one-letter code: DNA-directed RNA polymerase subunit beta' (1368 aa).

Residues 1–38 form a disordered region; that stretch reads MTSSSKPARKTSKSKSKASKAAEAPAAPSNELSREAPT. The segment covering 7–18 has biased composition (basic residues); sequence PARKTSKSKSKA. Over residues 19–29 the composition is skewed to low complexity; it reads SKAAEAPAAPS. Residues C250, C318, C325, and C328 each contribute to the Zn(2+) site. Residues 1340–1368 form a disordered region; the sequence is AGEELAEEHVPDPGALEGLQEEGLLSQDS. Positions 1353–1368 are enriched in low complexity; sequence GALEGLQEEGLLSQDS.

This sequence belongs to the RNA polymerase beta' chain family. RpoC2 subfamily. In terms of assembly, in cyanobacteria the RNAP catalytic core is composed of 2 alpha, 1 beta, 1 beta', 1 gamma and 1 omega subunit. When a sigma factor is associated with the core the holoenzyme is formed, which can initiate transcription. The cofactor is Zn(2+).

The enzyme catalyses RNA(n) + a ribonucleoside 5'-triphosphate = RNA(n+1) + diphosphate. In terms of biological role, DNA-dependent RNA polymerase catalyzes the transcription of DNA into RNA using the four ribonucleoside triphosphates as substrates. This Synechococcus sp. (strain RCC307) protein is DNA-directed RNA polymerase subunit beta'.